We begin with the raw amino-acid sequence, 152 residues long: MKIEVIVPGKISKHLKSAFDFYLDKLKRFCDLKISFVRLGGDINKTSKSVILNNEEKEILNKLKGRSFVLLDLYGKQIDSLEFSSLLKNKLLEGNLCFVIGGPLGISENLRRMSEKRISLSKLTFTHEMALILLLEQLFRGFKIINNEKYHY.

Residues Leu-71, Gly-101, and 120-125 (LSKLTF) contribute to the S-adenosyl-L-methionine site.

This sequence belongs to the RNA methyltransferase RlmH family. Homodimer.

It is found in the cytoplasm. The catalysed reaction is pseudouridine(1915) in 23S rRNA + S-adenosyl-L-methionine = N(3)-methylpseudouridine(1915) in 23S rRNA + S-adenosyl-L-homocysteine + H(+). Its function is as follows. Specifically methylates the pseudouridine at position 1915 (m3Psi1915) in 23S rRNA. This is Ribosomal RNA large subunit methyltransferase H from Thermosipho melanesiensis (strain DSM 12029 / CIP 104789 / BI429).